We begin with the raw amino-acid sequence, 432 residues long: Serine hydroxymethyltransferase (432 aa).

(6S)-5,6,7,8-tetrahydrofolate-binding positions include leucine 131 and 135 to 137; that span reads GHL. Position 240 is an N6-(pyridoxal phosphate)lysine (lysine 240).

Belongs to the SHMT family. As to quaternary structure, homodimer. Pyridoxal 5'-phosphate serves as cofactor.

It is found in the cytoplasm. It carries out the reaction (6R)-5,10-methylene-5,6,7,8-tetrahydrofolate + glycine + H2O = (6S)-5,6,7,8-tetrahydrofolate + L-serine. Its pathway is one-carbon metabolism; tetrahydrofolate interconversion. It functions in the pathway amino-acid biosynthesis; glycine biosynthesis; glycine from L-serine: step 1/1. Its function is as follows. Catalyzes the reversible interconversion of serine and glycine with tetrahydrofolate (THF) serving as the one-carbon carrier. This reaction serves as the major source of one-carbon groups required for the biosynthesis of purines, thymidylate, methionine, and other important biomolecules. Also exhibits THF-independent aldolase activity toward beta-hydroxyamino acids, producing glycine and aldehydes, via a retro-aldol mechanism. This chain is Serine hydroxymethyltransferase, found in Acidiphilium cryptum (strain JF-5).